We begin with the raw amino-acid sequence, 390 residues long: Leu/Ile/Val-binding protein homolog 6 (390 aa).

The N-terminal stretch at Met1 to Ala21 is a signal peptide.

This sequence belongs to the leucine-binding protein family.

In terms of biological role, component of an amino-acid transport system. This Brucella melitensis biotype 1 (strain ATCC 23456 / CCUG 17765 / NCTC 10094 / 16M) protein is Leu/Ile/Val-binding protein homolog 6.